The primary structure comprises 372 residues: N-methyl-L-tryptophan oxidase (372 aa).

Residue 4–34 coordinates FAD; it reads DLIIIGSGSVGAAAGYYATRAGLNVLMTDAH. Residue Cys-308 is modified to S-8alpha-FAD cysteine.

It belongs to the MSOX/MTOX family. MTOX subfamily. As to quaternary structure, monomer. The cofactor is FAD.

It carries out the reaction N(alpha)-methyl-L-tryptophan + O2 + H2O = L-tryptophan + formaldehyde + H2O2. Its function is as follows. Catalyzes the oxidative demethylation of N-methyl-L-tryptophan. This Shigella boydii serotype 18 (strain CDC 3083-94 / BS512) protein is N-methyl-L-tryptophan oxidase.